The primary structure comprises 723 residues: MENMAEEELLPQEKEEAQVRVPTPDSAPVPAPAADTALDSAPTPDSAPAPALAPAPAPALSPSLASVPEEAESKRHISIQRRLADLEKLAFGTEGDVDSASSLNSDNLENIQTCPLCPKEKFRAYSSHKLRRHLQNLHWKISVEFEGSRMCICHLACRPVKPTIVGEQISSKLGAHYHCIICSATITRRTDMLGHVKRHVNKGETKSRYISASTAKSSNEVLKETDTDIQVFPNYSIPQKTDSYFNPKMKLNRQIIFCTLAALAEERKPLECLDAFGATGIMGLQWAKHLGNAVKVTINDLNENSVTLIQKNCHLNKLKVVVDSEEKEEGDGLEDCSTAGDIQVTRMDANVLMHLRSFDFIHLDPFGTSVNYLDSAFRNVRNLGIVSVTSTDISSLYAKAQHVARRHYGCNIVRTEYYKELAARIVVAAVARAAARCNKGVEVLFAVALEHFVLVVVRVLRGPTSADETAKKIQYLIHCQWCEERIFQKDGNMVEENPYKQLPCNCHGSMPGKTAIELGPLWSSSLFNTGFLKRMLFESIHHGLDDIQPLIKTLIFESECTPQSQCSVHAPSNTNKQEENGVFVKTTDDTTIDIYSAQGKRKSNEMAINVAKKQKTDASTAHPPFYYNIHRHSIKGMNMPKLKKFLCCLSQAGFRVSRTHFDPMGIRTDASLTQFKSILLKYSTPTYTGGQSEGQVPAPEDTVTDPVELSVNDKAEVSGCRRW.

A compositionally biased stretch (acidic residues) spans 1-10; it reads MENMAEEELL. Positions 1-72 are disordered; that stretch reads MENMAEEELL…SLASVPEEAE (72 aa). Threonine 23 carries the post-translational modification Phosphothreonine. A compositionally biased stretch (low complexity) spans 32-44; the sequence is PAADTALDSAPTP. A compositionally biased stretch (pro residues) spans 45–59; sequence DSAPAPALAPAPAPA. Serine 61 bears the Phosphoserine mark. Residues 128–132 carry the Nucleolar localization signal motif; that stretch reads HKLRR. The C2H2-type zinc-finger motif lies at 177–199; sequence YHCIICSATITRRTDMLGHVKRH. Positions 220-679 constitute a Trm1 methyltransferase domain; it reads EVLKETDTDI…ASLTQFKSIL (460 aa). Residues arginine 253, aspartate 300, aspartate 348, and alanine 349 each contribute to the S-adenosyl-L-methionine site. Residues cysteine 479, cysteine 482, cysteine 504, and cysteine 506 each contribute to the Zn(2+) site. Lysine 576 is covalently cross-linked (Glycyl lysine isopeptide (Lys-Gly) (interchain with G-Cter in SUMO2)). Serine 603 carries the post-translational modification Phosphoserine.

This sequence belongs to the class I-like SAM-binding methyltransferase superfamily. Trm1 family.

It localises to the nucleus. It is found in the nucleolus. The catalysed reaction is guanosine(27) in tRNA(Tyr) + 2 S-adenosyl-L-methionine = N(2)-dimethylguanosine(27) in tRNA(Tyr) + 2 S-adenosyl-L-homocysteine + 2 H(+). In terms of biological role, specifically dimethylates a single guanine residue at position 27 of tRNA(Tyr) using S-adenosyl-L-methionine as donor of the methyl groups. Dimethylation at position 27 of tRNA(Tyr) is required for efficient translation of tyrosine codons. Also required to maintain 3-(3-amino-3-carboxypropyl)uridine (acp3U) in the D-loop of several cytoplasmic tRNAs. This is tRNA (guanine(27)-N(2))-dimethyltransferase from Rattus norvegicus (Rat).